Here is a 61-residue protein sequence, read N- to C-terminus: Large ribosomal subunit protein uL30 (61 aa).

Belongs to the universal ribosomal protein uL30 family. In terms of assembly, part of the 50S ribosomal subunit.

In Marinomonas sp. (strain MWYL1), this protein is Large ribosomal subunit protein uL30.